The sequence spans 95 residues: MRHYEIMIILDPAQDERTVAPSLDKYLDVVRKEKGNVDKVDIWGKRRLAYPIQKKEEGIYVVVDFTCESATVLEVDRLLNLNDSVLRTKVLRTDA.

This sequence belongs to the bacterial ribosomal protein bS6 family.

In terms of biological role, binds together with bS18 to 16S ribosomal RNA. This Corynebacterium kroppenstedtii (strain DSM 44385 / JCM 11950 / CIP 105744 / CCUG 35717) protein is Small ribosomal subunit protein bS6.